A 180-amino-acid polypeptide reads, in one-letter code: ATP synthase subunit delta (180 aa).

This sequence belongs to the ATPase delta chain family. In terms of assembly, F-type ATPases have 2 components, F(1) - the catalytic core - and F(0) - the membrane proton channel. F(1) has five subunits: alpha(3), beta(3), gamma(1), delta(1), epsilon(1). F(0) has three main subunits: a(1), b(2) and c(10-14). The alpha and beta chains form an alternating ring which encloses part of the gamma chain. F(1) is attached to F(0) by a central stalk formed by the gamma and epsilon chains, while a peripheral stalk is formed by the delta and b chains.

It localises to the cell membrane. F(1)F(0) ATP synthase produces ATP from ADP in the presence of a proton or sodium gradient. F-type ATPases consist of two structural domains, F(1) containing the extramembraneous catalytic core and F(0) containing the membrane proton channel, linked together by a central stalk and a peripheral stalk. During catalysis, ATP synthesis in the catalytic domain of F(1) is coupled via a rotary mechanism of the central stalk subunits to proton translocation. Its function is as follows. This protein is part of the stalk that links CF(0) to CF(1). It either transmits conformational changes from CF(0) to CF(1) or is implicated in proton conduction. The sequence is that of ATP synthase subunit delta from Limosilactobacillus reuteri (strain DSM 20016) (Lactobacillus reuteri).